Reading from the N-terminus, the 388-residue chain is Chorismate synthase (388 aa).

NADP(+)-binding residues include R39 and R45. Residues 132 to 134, 251 to 252, G296, 311 to 315, and R337 contribute to the FMN site; these read RSS, NA, and KPIPT.

In terms of assembly, homotetramer. FMNH2 is required as a cofactor.

It carries out the reaction 5-O-(1-carboxyvinyl)-3-phosphoshikimate = chorismate + phosphate. The protein operates within metabolic intermediate biosynthesis; chorismate biosynthesis; chorismate from D-erythrose 4-phosphate and phosphoenolpyruvate: step 7/7. Its function is as follows. Catalyzes the anti-1,4-elimination of the C-3 phosphate and the C-6 proR hydrogen from 5-enolpyruvylshikimate-3-phosphate (EPSP) to yield chorismate, which is the branch point compound that serves as the starting substrate for the three terminal pathways of aromatic amino acid biosynthesis. This reaction introduces a second double bond into the aromatic ring system. This Staphylococcus aureus protein is Chorismate synthase.